Here is an 85-residue protein sequence, read N- to C-terminus: Large ribosomal subunit protein bL27 (85 aa).

Positions methionine 1–leucine 21 are disordered.

Belongs to the bacterial ribosomal protein bL27 family.

This chain is Large ribosomal subunit protein bL27, found in Porphyromonas gingivalis (strain ATCC 33277 / DSM 20709 / CIP 103683 / JCM 12257 / NCTC 11834 / 2561).